Here is a 237-residue protein sequence, read N- to C-terminus: Demethylmenaquinone methyltransferase (237 aa).

Residues Thr-62, Asp-80, 102–103, and Ser-119 contribute to the S-adenosyl-L-methionine site; that span reads DA.

The protein belongs to the class I-like SAM-binding methyltransferase superfamily. MenG/UbiE family.

It catalyses the reaction a 2-demethylmenaquinol + S-adenosyl-L-methionine = a menaquinol + S-adenosyl-L-homocysteine + H(+). It functions in the pathway quinol/quinone metabolism; menaquinone biosynthesis; menaquinol from 1,4-dihydroxy-2-naphthoate: step 2/2. Its function is as follows. Methyltransferase required for the conversion of demethylmenaquinol (DMKH2) to menaquinol (MKH2). The sequence is that of Demethylmenaquinone methyltransferase from Renibacterium salmoninarum (strain ATCC 33209 / DSM 20767 / JCM 11484 / NBRC 15589 / NCIMB 2235).